The sequence spans 869 residues: Probable beta-glucosidase F (869 aa).

An N-terminal signal peptide occupies residues Met1–Ser19. Residues Asn77 and Asn261 are each glycosylated (N-linked (GlcNAc...) asparagine). Asp289 is an active-site residue. N-linked (GlcNAc...) asparagine glycosylation is found at Asn332, Asn364, Asn399, and Asn478. The disordered stretch occupies residues Ser677–Pro697. Residues Pro681 to Thr691 are compositionally biased toward pro residues. A glycan (N-linked (GlcNAc...) asparagine) is linked at Asn728.

This sequence belongs to the glycosyl hydrolase 3 family.

The protein resides in the secreted. The enzyme catalyses Hydrolysis of terminal, non-reducing beta-D-glucosyl residues with release of beta-D-glucose.. Its pathway is glycan metabolism; cellulose degradation. Functionally, beta-glucosidases are one of a number of cellulolytic enzymes involved in the degradation of cellulosic biomass. Catalyzes the last step releasing glucose from the inhibitory cellobiose. The chain is Probable beta-glucosidase F (bglF) from Aspergillus fumigatus (strain ATCC MYA-4609 / CBS 101355 / FGSC A1100 / Af293) (Neosartorya fumigata).